Reading from the N-terminus, the 139-residue chain is Protein Turandot B (139 aa).

The first 21 residues, 1-21 (MNFKTALICFALLLIGTLCSA), serve as a signal peptide directing secretion.

This sequence belongs to the Turandot family.

It is found in the secreted. Its function is as follows. A humoral factor that may play a role in stress tolerance. In Drosophila sechellia (Fruit fly), this protein is Protein Turandot B.